We begin with the raw amino-acid sequence, 707 residues long: Polyribonucleotide nucleotidyltransferase (707 aa).

Mg(2+)-binding residues include aspartate 484 and aspartate 490. The 60-residue stretch at 551–610 (PRVVRMVVNPEKIRDIIGPAGKTITKIISETGVKIDIEEDGRLYITAPNLEAGERAKQMI) folds into the KH domain. An S1 motif domain is found at 620–688 (GGIYLGKVLR…KLGRIVLSRK (69 aa)). The interval 688 to 707 (KDAMPDEEESDNRKSDNRKK) is disordered. Over residues 698-707 (DNRKSDNRKK) the composition is skewed to basic and acidic residues.

Belongs to the polyribonucleotide nucleotidyltransferase family. It depends on Mg(2+) as a cofactor.

Its subcellular location is the cytoplasm. The enzyme catalyses RNA(n+1) + phosphate = RNA(n) + a ribonucleoside 5'-diphosphate. In terms of biological role, involved in mRNA degradation. Catalyzes the phosphorolysis of single-stranded polyribonucleotides processively in the 3'- to 5'-direction. The protein is Polyribonucleotide nucleotidyltransferase of Caldanaerobacter subterraneus subsp. tengcongensis (strain DSM 15242 / JCM 11007 / NBRC 100824 / MB4) (Thermoanaerobacter tengcongensis).